Consider the following 217-residue polypeptide: Protein-L-isoaspartate O-methyltransferase (217 aa).

The active site involves S61.

The protein belongs to the methyltransferase superfamily. L-isoaspartyl/D-aspartyl protein methyltransferase family.

The protein resides in the cytoplasm. It carries out the reaction [protein]-L-isoaspartate + S-adenosyl-L-methionine = [protein]-L-isoaspartate alpha-methyl ester + S-adenosyl-L-homocysteine. Its function is as follows. Catalyzes the methyl esterification of L-isoaspartyl residues in peptides and proteins that result from spontaneous decomposition of normal L-aspartyl and L-asparaginyl residues. It plays a role in the repair and/or degradation of damaged proteins. This Syntrophotalea carbinolica (strain DSM 2380 / NBRC 103641 / GraBd1) (Pelobacter carbinolicus) protein is Protein-L-isoaspartate O-methyltransferase.